A 156-amino-acid polypeptide reads, in one-letter code: UPF0460 protein in nifX 3'region (156 aa).

Belongs to the UPF0460 family.

This is UPF0460 protein in nifX 3'region from Rhodobacter capsulatus (Rhodopseudomonas capsulata).